Consider the following 282-residue polypeptide: Tetraspanin-6 (282 aa).

The Cytoplasmic portion of the chain corresponds to 1 to 7; it reads MYRFSNT. The chain crosses the membrane as a helical span at residues 8 to 28; that stretch reads VIGVLNLLTLLASIPIIGTAL. At 29–44 the chain is on the extracellular side; that stretch reads YKARSSTTCENFLQTP. Residues 45–65 form a helical membrane-spanning segment; that stretch reads LLVIGFIILIVSLAGFIGACF. The Cytoplasmic portion of the chain corresponds to 66–74; it reads NVAWALWVY. The chain crosses the membrane as a helical span at residues 75–95; that stretch reads LVVMIFLIATLMGLTLFGLVV. At 96–220 the chain is on the extracellular side; the sequence is TSQGGGVEVP…EIRLDWRKLS (125 aa). The chain crosses the membrane as a helical span at residues 221-241; that stretch reads VVNILVLVLLIAVYAAGCCAF. At 242-282 the chain is on the cytoplasmic side; that stretch reads HNTRHAAHPYHPSDDNRMTRVRPRWDYYWWRWWHEKKEQLY.

Belongs to the tetraspanin (TM4SF) family.

Its subcellular location is the membrane. Its function is as follows. May be involved in the regulation of cell differentiation. In Arabidopsis thaliana (Mouse-ear cress), this protein is Tetraspanin-6 (TET6).